The following is a 115-amino-acid chain: DNA-binding protein Ta0052 (115 aa).

The interval 1–41 (MDDDEELERIRRQQLESMQRQAMQEQMREEQEKQREAERAR) is disordered. Residues 15–25 (LESMQRQAMQE) are compositionally biased toward low complexity. Over residues 26–41 (QMREEQEKQREAERAR) the composition is skewed to basic and acidic residues.

Belongs to the PDCD5 family.

The sequence is that of DNA-binding protein Ta0052 from Thermoplasma acidophilum (strain ATCC 25905 / DSM 1728 / JCM 9062 / NBRC 15155 / AMRC-C165).